The chain runs to 271 residues: 4-hydroxy-tetrahydrodipicolinate reductase (271 aa).

NAD(+)-binding positions include 12–17 and glutamate 38; that span reads GGSGRM. Arginine 39 serves as a coordination point for NADP(+). Residues 102–104 and 126–129 each bind NAD(+); these read GTT and APNM. The active-site Proton donor/acceptor is histidine 159. Histidine 160 contacts (S)-2,3,4,5-tetrahydrodipicolinate. Lysine 163 (proton donor) is an active-site residue. 169 to 170 lines the (S)-2,3,4,5-tetrahydrodipicolinate pocket; it reads GT.

This sequence belongs to the DapB family.

It is found in the cytoplasm. It carries out the reaction (S)-2,3,4,5-tetrahydrodipicolinate + NAD(+) + H2O = (2S,4S)-4-hydroxy-2,3,4,5-tetrahydrodipicolinate + NADH + H(+). The catalysed reaction is (S)-2,3,4,5-tetrahydrodipicolinate + NADP(+) + H2O = (2S,4S)-4-hydroxy-2,3,4,5-tetrahydrodipicolinate + NADPH + H(+). The protein operates within amino-acid biosynthesis; L-lysine biosynthesis via DAP pathway; (S)-tetrahydrodipicolinate from L-aspartate: step 4/4. In terms of biological role, catalyzes the conversion of 4-hydroxy-tetrahydrodipicolinate (HTPA) to tetrahydrodipicolinate. In Shewanella sediminis (strain HAW-EB3), this protein is 4-hydroxy-tetrahydrodipicolinate reductase.